A 422-amino-acid chain; its full sequence is La-related protein 6A (422 aa).

Residues 1-94 (MSSLPLRSGE…DHGENPVETD (94 aa)) are disordered. A compositionally biased stretch (low complexity) spans 48–61 (VTESSDDVVVNVSE). Positions 73 to 89 (DHERNSGEDRDQDHGEN) are enriched in basic and acidic residues. Residues 97 to 188 (VVPIDELNQK…KRLSPLPEIR (92 aa)) enclose the HTH La-type RNA-binding domain. In terms of domain architecture, RRM spans 193-283 (FTVLVENLPE…NGLRVKLLEQ (91 aa)). Residues 286–422 (GKFAQRRPAR…PTSTQTSHEV (137 aa)) are disordered. Residues 295-348 (RREVDKEKDTTGRVHDQTGGEKNKKTREHQNHRLHHSDNPADDDGGNHQKDKNG) are compositionally biased toward basic and acidic residues.

Its subcellular location is the nucleus. Its function is as follows. Transcriptional regulator. The polypeptide is La-related protein 6A (LARP6A) (Arabidopsis thaliana (Mouse-ear cress)).